Consider the following 408-residue polypeptide: LL-diaminopimelate aminotransferase (408 aa).

2 residues coordinate substrate: tyrosine 15 and glycine 42. Residues tyrosine 72, serine 108 to lysine 109, tyrosine 132, asparagine 187, tyrosine 218, and serine 246 to serine 248 each bind pyridoxal 5'-phosphate. Lysine 109, tyrosine 132, and asparagine 187 together coordinate substrate. Lysine 249 bears the N6-(pyridoxal phosphate)lysine mark. 2 residues coordinate pyridoxal 5'-phosphate: arginine 257 and asparagine 292. Asparagine 292 and arginine 388 together coordinate substrate.

This sequence belongs to the class-I pyridoxal-phosphate-dependent aminotransferase family. LL-diaminopimelate aminotransferase subfamily. As to quaternary structure, homodimer. It depends on pyridoxal 5'-phosphate as a cofactor.

The enzyme catalyses (2S,6S)-2,6-diaminopimelate + 2-oxoglutarate = (S)-2,3,4,5-tetrahydrodipicolinate + L-glutamate + H2O + H(+). The protein operates within amino-acid biosynthesis; L-lysine biosynthesis via DAP pathway; LL-2,6-diaminopimelate from (S)-tetrahydrodipicolinate (aminotransferase route): step 1/1. Its function is as follows. Involved in the synthesis of meso-diaminopimelate (m-DAP or DL-DAP), required for both lysine and peptidoglycan biosynthesis. Catalyzes the direct conversion of tetrahydrodipicolinate to LL-diaminopimelate. The sequence is that of LL-diaminopimelate aminotransferase from Leptospira interrogans serogroup Icterohaemorrhagiae serovar Lai (strain 56601).